A 351-amino-acid polypeptide reads, in one-letter code: Uroporphyrinogen decarboxylase (351 aa).

Residues 25-29 (RQAGR), D74, Y151, S206, and H325 each bind substrate.

It belongs to the uroporphyrinogen decarboxylase family. As to quaternary structure, homodimer.

The protein resides in the cytoplasm. The catalysed reaction is uroporphyrinogen III + 4 H(+) = coproporphyrinogen III + 4 CO2. It functions in the pathway porphyrin-containing compound metabolism; protoporphyrin-IX biosynthesis; coproporphyrinogen-III from 5-aminolevulinate: step 4/4. Catalyzes the decarboxylation of four acetate groups of uroporphyrinogen-III to yield coproporphyrinogen-III. The chain is Uroporphyrinogen decarboxylase from Chlorobium phaeobacteroides (strain BS1).